Consider the following 387-residue polypeptide: Succinate--CoA ligase [ADP-forming] subunit beta (387 aa).

Residues Lys-46, 53-55 (GRG), Glu-99, Ala-102, and Glu-107 each bind ATP. Positions 199 and 213 each coordinate Mg(2+). Residues Asn-264 and 321-323 (GIV) each bind substrate.

It belongs to the succinate/malate CoA ligase beta subunit family. Heterotetramer of two alpha and two beta subunits. It depends on Mg(2+) as a cofactor.

It carries out the reaction succinate + ATP + CoA = succinyl-CoA + ADP + phosphate. It catalyses the reaction GTP + succinate + CoA = succinyl-CoA + GDP + phosphate. It functions in the pathway carbohydrate metabolism; tricarboxylic acid cycle; succinate from succinyl-CoA (ligase route): step 1/1. In terms of biological role, succinyl-CoA synthetase functions in the citric acid cycle (TCA), coupling the hydrolysis of succinyl-CoA to the synthesis of either ATP or GTP and thus represents the only step of substrate-level phosphorylation in the TCA. The beta subunit provides nucleotide specificity of the enzyme and binds the substrate succinate, while the binding sites for coenzyme A and phosphate are found in the alpha subunit. The polypeptide is Succinate--CoA ligase [ADP-forming] subunit beta (Campylobacter jejuni subsp. doylei (strain ATCC BAA-1458 / RM4099 / 269.97)).